Consider the following 323-residue polypeptide: PI-PLC X domain-containing protein 1 (323 aa).

The PI-PLC X-box domain occupies 30–206 (RLWDVPLHHL…QVIVSYEDES (177 aa)).

As to expression, widely expressed.

Its subcellular location is the cytoplasm. In Homo sapiens (Human), this protein is PI-PLC X domain-containing protein 1 (PLCXD1).